Consider the following 367-residue polypeptide: Probable butyrate kinase (367 aa).

Belongs to the acetokinase family.

It is found in the cytoplasm. The enzyme catalyses butanoate + ATP = butanoyl phosphate + ADP. This Exiguobacterium sibiricum (strain DSM 17290 / CCUG 55495 / CIP 109462 / JCM 13490 / 255-15) protein is Probable butyrate kinase.